Here is a 393-residue protein sequence, read N- to C-terminus: tRNA(Met) cytidine acetate ligase (393 aa).

Residues G81, N142, and R167 each contribute to the ATP site.

Belongs to the TmcAL family.

The protein localises to the cytoplasm. It carries out the reaction cytidine(34) in elongator tRNA(Met) + acetate + ATP = N(4)-acetylcytidine(34) in elongator tRNA(Met) + AMP + diphosphate. In terms of biological role, catalyzes the formation of N(4)-acetylcytidine (ac(4)C) at the wobble position of elongator tRNA(Met), using acetate and ATP as substrates. First activates an acetate ion to form acetyladenylate (Ac-AMP) and then transfers the acetyl group to tRNA to form ac(4)C34. The protein is tRNA(Met) cytidine acetate ligase of Bacillus cereus (strain ATCC 14579 / DSM 31 / CCUG 7414 / JCM 2152 / NBRC 15305 / NCIMB 9373 / NCTC 2599 / NRRL B-3711).